A 417-amino-acid polypeptide reads, in one-letter code: MGVRGALHLLLVCLSPALLSAVRINGDGQEVMYLAEGDNVRLGCPYLLDPEDLGTNSLDIEWMQVNSEPSHRENVFLTYQDKRIGHGNLPHLQQRVRFAASDPSQYDASINLMNLQVSDTATYECRVKKTTMATRKVIVTVQARPAVPMCWTEGHMSKGNDVVLKCFANGGSQPLSYKWAKISGHSHPYRAGAYHSQHSFHSELSYQESFHSTINQGLGNGDLLLKGINADDDGLYQCTVANHVGYSVCVVEVKVSDSQRVGMIVGAVLGSLLMLACLALGIWGLICCCCGGGGAGGARGAFGYGVGGGVGGGACGDLASEIRVDAEAPGCKASGRGSRVTHLLGYPTQNVSRSLRRKYAPPPCGGPEDVALVPRTASASCEAGPSPVYIKVKSAEPADCADCAQVEQRSCKDGLLV.

The signal sequence occupies residues 1–21 (MGVRGALHLLLVCLSPALLSA). Ig-like V-type domains lie at 22 to 140 (VRIN…VIVT) and 145 to 256 (PAVP…VKVS). At 22–262 (VRINGDGQEV…VKVSDSQRVG (241 aa)) the chain is on the extracellular side. 2 cysteine pairs are disulfide-bonded: Cys-44–Cys-125 and Cys-166–Cys-238. A helical transmembrane segment spans residues 263-283 (MIVGAVLGSLLMLACLALGIW). Residues 284 to 417 (GLICCCCGGG…QRSCKDGLLV (134 aa)) lie on the Cytoplasmic side of the membrane.

It is found in the membrane. The sequence is that of V-set and immunoglobulin domain-containing protein 8 (Vsig8) from Mus musculus (Mouse).